A 518-amino-acid polypeptide reads, in one-letter code: Sodium-dependent glucose transporter 1 (518 aa).

12 consecutive transmembrane segments (helical) span residues 19–39 (TFQD…FIFV), 53–73 (GFLV…SATT), 82–102 (CKTA…IGIL), 107–127 (NVLI…ALHF), 139–159 (LAKL…SDFH), 221–241 (FRRA…FFFY), 307–327 (TSSL…IATS), 347–367 (YTTI…LGEM), 376–396 (LQGK…ASIA), 400–420 (LFPV…KEDR), 438–458 (EEEN…EMIE), and 466–486 (SIIE…YNQY). Over residues 414–426 (RQRKEDRKSEDQK) the composition is skewed to basic and acidic residues. The disordered stretch occupies residues 414 to 448 (RQRKEDRKSEDQKALLSSSGLNEYEEENEEEDAEK). The segment covering 436–448 (EYEEENEEEDAEK) has biased composition (acidic residues).

The protein belongs to the major facilitator superfamily.

It is found in the apical cell membrane. May function as a sodium-dependent glucose transporter. Potential channels for urea in the inner medulla of kidney. This Homo sapiens (Human) protein is Sodium-dependent glucose transporter 1.